A 614-amino-acid polypeptide reads, in one-letter code: V-type proton ATPase catalytic subunit A isoform 2 (614 aa).

Ser-142 bears the Phosphoserine mark. Residue 247-254 (GAFGCGKT) coordinates ATP.

It belongs to the ATPase alpha/beta chains family. As to quaternary structure, V-ATPase is a heteromultimeric enzyme made up of two complexes: the ATP-hydrolytic V1 complex and the proton translocation V0 complex. The V1 complex consists of three catalytic AB heterodimers that form a heterohexamer, three peripheral stalks each consisting of EG heterodimers, one central rotor including subunits D and F, and the regulatory subunits C and H. The proton translocation complex V0 consists of the proton transport subunit a, a ring of proteolipid subunits c9c'', rotary subunit d, subunits e and f, and the accessory subunits VhaAC45 and ATP6AP2.

The catalysed reaction is ATP + H2O + 4 H(+)(in) = ADP + phosphate + 5 H(+)(out). Its activity is regulated as follows. ATP hydrolysis occurs at the interface between the nucleotide-binding domains of subunits A and B. ATP hydrolysis triggers a conformational change in the subunits D and F, which induces a shift of subunit d. The c-ring is subsequently rotated and results in a continuous proton translocation across the membrane. Functionally, catalytic subunit of the V1 complex of vacuolar(H+)-ATPase (V-ATPase), a multisubunit enzyme composed of a peripheral complex (V1) that hydrolyzes ATP and a membrane integral complex (V0) that translocates protons. V-ATPase is responsible for acidifying and maintaining the pH of intracellular compartments and in some cell types, is targeted to the plasma membrane, where it is responsible for acidifying the extracellular environment. The sequence is that of V-type proton ATPase catalytic subunit A isoform 2 (Vha68-2) from Drosophila melanogaster (Fruit fly).